The primary structure comprises 426 residues: Serine--tRNA ligase (426 aa).

An L-serine-binding site is contributed by 233-235 (TSE). ATP is bound at residue 264–266 (RAE). Residue E287 participates in L-serine binding. 351–354 (EISS) serves as a coordination point for ATP. S387 serves as a coordination point for L-serine.

Belongs to the class-II aminoacyl-tRNA synthetase family. Type-1 seryl-tRNA synthetase subfamily. Homodimer. The tRNA molecule binds across the dimer.

It is found in the cytoplasm. The enzyme catalyses tRNA(Ser) + L-serine + ATP = L-seryl-tRNA(Ser) + AMP + diphosphate + H(+). It carries out the reaction tRNA(Sec) + L-serine + ATP = L-seryl-tRNA(Sec) + AMP + diphosphate + H(+). It functions in the pathway aminoacyl-tRNA biosynthesis; selenocysteinyl-tRNA(Sec) biosynthesis; L-seryl-tRNA(Sec) from L-serine and tRNA(Sec): step 1/1. In terms of biological role, catalyzes the attachment of serine to tRNA(Ser). Is also able to aminoacylate tRNA(Sec) with serine, to form the misacylated tRNA L-seryl-tRNA(Sec), which will be further converted into selenocysteinyl-tRNA(Sec). The polypeptide is Serine--tRNA ligase (Stenotrophomonas maltophilia (strain R551-3)).